A 78-amino-acid polypeptide reads, in one-letter code: Translational regulator CsrA (78 aa).

This sequence belongs to the CsrA/RsmA family. As to quaternary structure, homodimer; the beta-strands of each monomer intercalate to form a hydrophobic core, while the alpha-helices form wings that extend away from the core.

It localises to the cytoplasm. Functionally, a translational regulator that binds mRNA to regulate translation initiation and/or mRNA stability. Usually binds in the 5'-UTR at or near the Shine-Dalgarno sequence preventing ribosome-binding, thus repressing translation. Its main target seems to be the major flagellin gene, while its function is anatagonized by FliW. The protein is Translational regulator CsrA of Borrelia hermsii (strain HS1 / DAH).